The following is a 370-amino-acid chain: 2-Hydroxyacid oxidase 1 (370 aa).

The region spanning 1 to 365 (MLPRLVCISD…DKTLVRKNPL (365 aa)) is the FMN hydroxy acid dehydrogenase domain. Glyoxylate is bound at residue tyrosine 26. FMN is bound by residues 79–81 (ATA), serine 108, and glutamine 130. Tyrosine 132 serves as a coordination point for glyoxylate. An FMN-binding site is contributed by threonine 158. Position 167 (arginine 167) interacts with glyoxylate. Lysine 184 carries the N6-succinyllysine modification. Phosphoserine occurs at positions 194 and 230. Lysine 236 and serine 258 together coordinate FMN. Residues histidine 260 and arginine 263 each coordinate glyoxylate. Catalysis depends on histidine 260, which acts as the Proton acceptor. FMN-binding positions include 291–295 (DGGVR) and 314–315 (GR). The Microbody targeting signal motif lies at 368–370 (SKI).

It belongs to the FMN-dependent alpha-hydroxy acid dehydrogenase family. Homotetramer. It depends on FMN as a cofactor. Liver.

It is found in the peroxisome matrix. It catalyses the reaction a (2S)-2-hydroxycarboxylate + O2 = a 2-oxocarboxylate + H2O2. The catalysed reaction is glycolate + O2 = glyoxylate + H2O2. The enzyme catalyses glyoxylate + O2 + H2O = oxalate + H2O2 + H(+). It carries out the reaction 2-hydroxyhexadecanoate + O2 = 2-oxohexadecanoate + H2O2. It catalyses the reaction 2-hydroxyoctanoate + O2 = 2-oxooctanoate + H2O2. It functions in the pathway amino-acid biosynthesis; glycine biosynthesis. Functionally, broad substrate specificity (S)-2-hydroxy-acid oxidase that preferentially oxidizes glycolate. The glyoxylate produced by the oxidation of glycolate can then be utilized by alanine-glyoxylate aminotransferase for the peroxisomal synthesis of glycine; this pathway appears to be an important step for the detoxification of glyoxylate which, if allowed to accumulate, may be metabolized to oxalate with formation of kidney stones. Can also catalyze the oxidation glyoxylate, and long chain hydroxyacids such as 2-hydroxyhexadecanoate and 2-hydroxyoctanoate. Active in vitro with the artificial electron acceptor 2,6-dichlorophenolindophenol (DCIP), but O2 is believed to be the physiological electron acceptor, leading to the production of H2O2. The protein is 2-Hydroxyacid oxidase 1 of Mus musculus (Mouse).